A 391-amino-acid polypeptide reads, in one-letter code: 3-ketoacyl-CoA thiolase (391 aa).

Catalysis depends on C95, which acts as the Acyl-thioester intermediate. Active-site proton acceptor residues include H347 and C377.

The protein belongs to the thiolase-like superfamily. Thiolase family. Heterotetramer of two alpha chains (FadB) and two beta chains (FadA).

The protein resides in the cytoplasm. The catalysed reaction is an acyl-CoA + acetyl-CoA = a 3-oxoacyl-CoA + CoA. Its pathway is lipid metabolism; fatty acid beta-oxidation. Its function is as follows. Catalyzes the final step of fatty acid oxidation in which acetyl-CoA is released and the CoA ester of a fatty acid two carbons shorter is formed. This chain is 3-ketoacyl-CoA thiolase, found in Pseudomonas savastanoi pv. phaseolicola (strain 1448A / Race 6) (Pseudomonas syringae pv. phaseolicola (strain 1448A / Race 6)).